The sequence spans 198 residues: Recombination protein RecR (198 aa).

The segment at 57-72 (CSICGNLTDDDPCHIC) adopts a C4-type zinc-finger fold. In terms of domain architecture, Toprim spans 80 to 175 (TTILVVEDAK…KVTRLARGLA (96 aa)).

It belongs to the RecR family.

Functionally, may play a role in DNA repair. It seems to be involved in an RecBC-independent recombinational process of DNA repair. It may act with RecF and RecO. The chain is Recombination protein RecR from Streptococcus pyogenes serotype M5 (strain Manfredo).